Consider the following 277-residue polypeptide: Large ribosomal subunit protein uL2c (277 aa).

Residues 30–60 form a disordered region; it reads RKKLTSGQHSGKGRNNRGIITSRHRGGGHKR. The segment covering 51 to 60 has biased composition (basic residues); the sequence is SRHRGGGHKR.

It belongs to the universal ribosomal protein uL2 family. As to quaternary structure, part of the 50S ribosomal subunit.

The protein localises to the plastid. It is found in the chloroplast. The polypeptide is Large ribosomal subunit protein uL2c (rpl2) (Angiopteris evecta (Mule's foot fern)).